Here is a 152-residue protein sequence, read N- to C-terminus: Large ribosomal subunit protein uL22 (152 aa).

A compositionally biased stretch (low complexity) spans Ala-124 to Ala-143. Positions Ala-124 to Glu-152 are disordered.

It belongs to the universal ribosomal protein uL22 family. As to quaternary structure, part of the 50S ribosomal subunit.

This protein binds specifically to 23S rRNA; its binding is stimulated by other ribosomal proteins, e.g. L4, L17, and L20. It is important during the early stages of 50S assembly. It makes multiple contacts with different domains of the 23S rRNA in the assembled 50S subunit and ribosome. In terms of biological role, the globular domain of the protein is located near the polypeptide exit tunnel on the outside of the subunit, while an extended beta-hairpin is found that lines the wall of the exit tunnel in the center of the 70S ribosome. This chain is Large ribosomal subunit protein uL22, found in Salinispora arenicola (strain CNS-205).